Here is a 362-residue protein sequence, read N- to C-terminus: 3-dehydroquinate synthase (362 aa).

NAD(+) is bound by residues 71–76, 105–109, 129–130, Lys-142, Lys-151, and 169–172; these read DGEQYK, GVVGD, TT, and CLKT. Zn(2+) is bound by residues Glu-184, His-247, and His-264.

This sequence belongs to the sugar phosphate cyclases superfamily. Dehydroquinate synthase family. Co(2+) is required as a cofactor. It depends on Zn(2+) as a cofactor. The cofactor is NAD(+).

The protein localises to the cytoplasm. The enzyme catalyses 7-phospho-2-dehydro-3-deoxy-D-arabino-heptonate = 3-dehydroquinate + phosphate. The protein operates within metabolic intermediate biosynthesis; chorismate biosynthesis; chorismate from D-erythrose 4-phosphate and phosphoenolpyruvate: step 2/7. Catalyzes the conversion of 3-deoxy-D-arabino-heptulosonate 7-phosphate (DAHP) to dehydroquinate (DHQ). In Escherichia coli O6:K15:H31 (strain 536 / UPEC), this protein is 3-dehydroquinate synthase.